A 236-amino-acid chain; its full sequence is Small ribosomal subunit protein uS2c (236 aa).

The protein belongs to the universal ribosomal protein uS2 family.

The protein resides in the plastid. Its subcellular location is the chloroplast. The polypeptide is Small ribosomal subunit protein uS2c (rps2) (Phalaenopsis aphrodite subsp. formosana (Moth orchid)).